The sequence spans 29 residues: Cytochrome b6-f complex subunit 8 (29 aa).

The chain crosses the membrane as a helical span at residues 3 to 23 (IISLGWSSLLVVFTFSLSLVV).

This sequence belongs to the PetN family. In terms of assembly, the 4 large subunits of the cytochrome b6-f complex are cytochrome b6, subunit IV (17 kDa polypeptide, PetD), cytochrome f and the Rieske protein, while the 4 small subunits are PetG, PetL, PetM and PetN. The complex functions as a dimer.

It localises to the plastid. The protein resides in the chloroplast thylakoid membrane. In terms of biological role, component of the cytochrome b6-f complex, which mediates electron transfer between photosystem II (PSII) and photosystem I (PSI), cyclic electron flow around PSI, and state transitions. The chain is Cytochrome b6-f complex subunit 8 from Rhodomonas salina (Cryptomonas salina).